A 419-amino-acid polypeptide reads, in one-letter code: Tol-Pal system protein TolB (419 aa).

The first 19 residues, 1-19, serve as a signal peptide directing secretion; that stretch reads MCNRIISLFLLLFTGQVIA.

The protein belongs to the TolB family. In terms of assembly, the Tol-Pal system is composed of five core proteins: the inner membrane proteins TolA, TolQ and TolR, the periplasmic protein TolB and the outer membrane protein Pal. They form a network linking the inner and outer membranes and the peptidoglycan layer.

Its subcellular location is the periplasm. Part of the Tol-Pal system, which plays a role in outer membrane invagination during cell division and is important for maintaining outer membrane integrity. The sequence is that of Tol-Pal system protein TolB from Legionella pneumophila (strain Paris).